The primary structure comprises 155 residues: Large ribosomal subunit protein uL15 (155 aa).

Residues 1 to 16 (MVRRFKRAVKYRRGSR) are compositionally biased toward basic residues. The disordered stretch occupies residues 1 to 35 (MVRRFKRAVKYRRGSRTHGWGRVGQHRKSGGSGGK).

Belongs to the universal ribosomal protein uL15 family. In terms of assembly, part of the 50S ribosomal subunit.

In terms of biological role, binds to the 23S rRNA. This Pyrobaculum arsenaticum (strain DSM 13514 / JCM 11321 / PZ6) protein is Large ribosomal subunit protein uL15.